An 845-amino-acid chain; its full sequence is MWGASDKKYKSNQFRAMFFKNATFIKRQKCSLCVQISIPLILVIILVIVNFWVKSQIGSLQTNGGKLMNSTSTYQYNSLTFGYMLSVNENNITEIGYKDSDGSGSGLLNYTPQLYIPAFKAYTPFFVPFASVENMDDKILAMKENATFESLSSETLPLSALIFNDFNVNNRSLDYTIQCEEQSRYSFYPYEAFVAFSMNTMTTTILNYFLGGNGTIYKSNIATLPYYQQSTTIDIASLLGGSFYPFALSFIMPLFIYSIVYEKQEKLRDLSLMMGLKIRNYWFMTYIFNFLIYFIIIVFVVGVSSIFGFAVFVKGSQFAMFLFLFAWGNSMITFSFFLSTFFKKTRAASIFGYFLVIIAVNLNSILSYQVFKDSTPPVPYYWIPLLAFYRGMSQLSTQCGIDLCPEWSAYTWEFEMSKIIFWLYIDAIVYLLIALYLDQVLPREFGVPSHPLFFLKPILNLFKNKDNDKSNTINGGSGGGRRFSETSSLINSADFDVENNNGEQEIVEDEDVLEEKEMIINRRYDPNEMTVIIEGLTKHYVGRPKPSVDNLYLSVRKGEVLGFLGANGAGKTTTISMLTGLYTPTSGTAHVAGLDIRYDMDNIHHVIGVAMQFDIFWEDLSCVETLLYFTRLKGVPPEREIQSVESILKEVNLFEVKERLVKELSGGMKRRLSFAVAMTGDSSIIFLDEPSTGISSELRRDLWRTINDLKKNRSIILTTHSMEEADVLSSRIAIISQGKLQCIGTQNHLKAKFGDGYSVRINVEEPYINTHNPTELITKFSPQAVLTESFDGSYNYRFPKNTVISDLYQYLVSHKYDHHLQEWSFSQTSLEDVFLKISANDDTIN.

7 consecutive transmembrane segments (helical) span residues 33 to 53, 192 to 212, 235 to 255, 292 to 312, 318 to 338, 347 to 367, and 417 to 437; these read CVQISIPLILVIILVIVNFWV, AFVAFSMNTMTTTILNYFLGG, IASLLGGSFYPFALSFIMPLF, IYFIIIVFVVGVSSIFGFAVF, FAMFLFLFAWGNSMITFSFFL, AASIFGYFLVIIAVNLNSILS, and SKIIFWLYIDAIVYLLIALYL. The ABC transporter domain maps to 531-762; sequence VIIEGLTKHY…FGDGYSVRIN (232 aa). 565 to 572 contacts ATP; sequence GANGAGKT.

This sequence belongs to the ABC transporter superfamily. ABCA family.

The protein localises to the membrane. The polypeptide is ABC transporter A family member 9 (abcA9) (Dictyostelium discoideum (Social amoeba)).